The sequence spans 357 residues: Glutamine synthetase (357 aa).

A GS beta-grasp domain is found at 25 to 104 (VMAEYIWIDA…VLCETWDSDG (80 aa)). Residues 111–357 (YRHDCARLME…IIAETLCGGL (247 aa)) enclose the GS catalytic domain.

This sequence belongs to the glutamine synthetase family. Homooctamer.

It localises to the cytoplasm. The enzyme catalyses L-glutamate + NH4(+) + ATP = L-glutamine + ADP + phosphate + H(+). This is Glutamine synthetase (glnA) from Emericella nidulans (strain FGSC A4 / ATCC 38163 / CBS 112.46 / NRRL 194 / M139) (Aspergillus nidulans).